The chain runs to 427 residues: Serine--tRNA ligase (427 aa).

231-233 (TAE) serves as a coordination point for L-serine. Residue 262–264 (RSE) participates in ATP binding. Glu285 serves as a coordination point for L-serine. 349 to 352 (EISS) lines the ATP pocket. Ser385 lines the L-serine pocket.

Belongs to the class-II aminoacyl-tRNA synthetase family. Type-1 seryl-tRNA synthetase subfamily. Homodimer. The tRNA molecule binds across the dimer.

It is found in the cytoplasm. It carries out the reaction tRNA(Ser) + L-serine + ATP = L-seryl-tRNA(Ser) + AMP + diphosphate + H(+). The enzyme catalyses tRNA(Sec) + L-serine + ATP = L-seryl-tRNA(Sec) + AMP + diphosphate + H(+). Its pathway is aminoacyl-tRNA biosynthesis; selenocysteinyl-tRNA(Sec) biosynthesis; L-seryl-tRNA(Sec) from L-serine and tRNA(Sec): step 1/1. In terms of biological role, catalyzes the attachment of serine to tRNA(Ser). Is also able to aminoacylate tRNA(Sec) with serine, to form the misacylated tRNA L-seryl-tRNA(Sec), which will be further converted into selenocysteinyl-tRNA(Sec). The protein is Serine--tRNA ligase of Rhizobium etli (strain ATCC 51251 / DSM 11541 / JCM 21823 / NBRC 15573 / CFN 42).